The chain runs to 254 residues: Urease accessory protein UreF (254 aa).

Over residues 1–11 (MDKGKSVKSTE) the composition is skewed to basic and acidic residues. Residues 1–26 (MDKGKSVKSTEKSVGMPPKTPKTDNN) form a disordered region.

The protein belongs to the UreF family. As to quaternary structure, ureH, UreF and UreG form a complex that acts as a GTP-hydrolysis-dependent molecular chaperone, activating the urease apoprotein by helping to assemble the nickel containing metallocenter of UreC. The UreE protein probably delivers the nickel.

It localises to the cytoplasm. Required for maturation of urease via the functional incorporation of the urease nickel metallocenter. This Helicobacter pylori (strain ATCC 700392 / 26695) (Campylobacter pylori) protein is Urease accessory protein UreF.